A 310-amino-acid chain; its full sequence is Tagatose-6-phosphate kinase (310 aa).

Belongs to the carbohydrate kinase PfkB family. LacC subfamily.

It catalyses the reaction D-tagatofuranose 6-phosphate + ATP = D-tagatofuranose 1,6-bisphosphate + ADP + H(+). It participates in carbohydrate metabolism; D-tagatose 6-phosphate degradation; D-glyceraldehyde 3-phosphate and glycerone phosphate from D-tagatose 6-phosphate: step 1/2. The sequence is that of Tagatose-6-phosphate kinase from Streptococcus uberis (strain ATCC BAA-854 / 0140J).